The sequence spans 519 residues: Importin subunit alpha-5 (519 aa).

The region spanning 1 to 58 (MSLRPSTKTEIRRIRYKVSVDAEEGRRRREDFLVEIRKSKRNENLMKKRRVKVLPPDY) is the IBB domain. ARM repeat units lie at residues 103–143 (SPPT…NIAS), 146–185 (SEHTKVVIDHGVVPLFVQLLASPDDDVREQAIWGLGNVAG), 188–228 (IQCR…NFFR), 230–269 (KPSPPFDLVKHVLPVLKRLVYSDDEQVLIDACWALSNLSD), 272–311 (NENIQSVIEAGVVPRLVELLQHASPVVLVPALRCIGNIVS), 314–354 (SQQT…NITA), 357–396 (EEQIQSVIDANLIPSLVNLAQHAEFDIKKEAIWAISNASV), and 400–439 (PNQIKYLVEQNCIKALCDILVCPDLRIILVSLGGLEMILI).

Belongs to the importin alpha family. In terms of assembly, forms a complex with importin subunit beta-1.

The protein localises to the nucleus envelope. In terms of biological role, binds to conventional NLS motifs and mediates nuclear protein import across the nuclear envelope. This Arabidopsis thaliana (Mouse-ear cress) protein is Importin subunit alpha-5.